Reading from the N-terminus, the 248-residue chain is NADP-dependent 3-hydroxy acid dehydrogenase YdfG (248 aa).

Residues 7–12 (GATAGF), 32–33 (RR), 54–55 (DV), and N81 contribute to the NADP(+) site. S134 provides a ligand contact to substrate. Residues Y147, K151, and 177 to 185 (PGLVGGTEF) contribute to the NADP(+) site. Catalysis depends on Y147, which acts as the Proton acceptor.

This sequence belongs to the short-chain dehydrogenases/reductases (SDR) family. In terms of assembly, homotetramer.

The enzyme catalyses 3-hydroxypropanoate + NADP(+) = 3-oxopropanoate + NADPH + H(+). It catalyses the reaction L-allo-threonine + NADP(+) = aminoacetone + CO2 + NADPH. In terms of biological role, NADP-dependent dehydrogenase with broad substrate specificity acting on 3-hydroxy acids. Catalyzes the NADP-dependent oxidation of L-allo-threonine to L-2-amino-3-keto-butyrate, which is spontaneously decarboxylated into aminoacetone. Also acts on D-threonine, L-serine, D-serine, D-3-hydroxyisobutyrate, L-3-hydroxyisobutyrate, D-glycerate and L-glycerate. Able to catalyze the reduction of the malonic semialdehyde to 3-hydroxypropionic acid. YdfG is apparently supplementing RutE, the presumed malonic semialdehyde reductase involved in pyrimidine degradation since both are able to detoxify malonic semialdehyde. This Shigella flexneri protein is NADP-dependent 3-hydroxy acid dehydrogenase YdfG.